The primary structure comprises 345 residues: Methylthioribose-1-phosphate isomerase (345 aa).

Residues 47-49 (RGA), R90, and Q197 contribute to the substrate site. Catalysis depends on D238, which acts as the Proton donor. 248 to 249 (NK) serves as a coordination point for substrate.

Belongs to the eIF-2B alpha/beta/delta subunits family. MtnA subfamily.

It carries out the reaction 5-(methylsulfanyl)-alpha-D-ribose 1-phosphate = 5-(methylsulfanyl)-D-ribulose 1-phosphate. The protein operates within amino-acid biosynthesis; L-methionine biosynthesis via salvage pathway; L-methionine from S-methyl-5-thio-alpha-D-ribose 1-phosphate: step 1/6. Functionally, catalyzes the interconversion of methylthioribose-1-phosphate (MTR-1-P) into methylthioribulose-1-phosphate (MTRu-1-P). This chain is Methylthioribose-1-phosphate isomerase, found in Thermoanaerobacter pseudethanolicus (strain ATCC 33223 / 39E) (Clostridium thermohydrosulfuricum).